The primary structure comprises 320 residues: ATP-dependent 6-phosphofructokinase (320 aa).

An ATP-binding site is contributed by Gly11. Residue 21 to 25 coordinates ADP; that stretch reads RAVVR. Residues 72-73 and 102-105 contribute to the ATP site; these read RC and GDGS. Asp103 is a Mg(2+) binding site. 125-127 contacts substrate; the sequence is TID. Asp127 serves as the catalytic Proton acceptor. Residue Arg154 coordinates ADP. Residues Arg162 and 169–171 contribute to the substrate site; that span reads MGR. ADP is bound by residues 185 to 187 and 214 to 216; these read GAE and KTH. Residues Glu223, Arg244, and 250–253 each bind substrate; that span reads HIQR.

This sequence belongs to the phosphofructokinase type A (PFKA) family. ATP-dependent PFK group I subfamily. Prokaryotic clade 'B1' sub-subfamily. In terms of assembly, homotetramer. Requires Mg(2+) as cofactor.

The protein localises to the cytoplasm. The enzyme catalyses beta-D-fructose 6-phosphate + ATP = beta-D-fructose 1,6-bisphosphate + ADP + H(+). Its pathway is carbohydrate degradation; glycolysis; D-glyceraldehyde 3-phosphate and glycerone phosphate from D-glucose: step 3/4. Allosterically activated by ADP and other diphosphonucleosides, and allosterically inhibited by phosphoenolpyruvate. Functionally, catalyzes the phosphorylation of D-fructose 6-phosphate to fructose 1,6-bisphosphate by ATP, the first committing step of glycolysis. This is ATP-dependent 6-phosphofructokinase from Clostridium botulinum (strain Eklund 17B / Type B).